A 266-amino-acid chain; its full sequence is MKAVVLTLAVLFLTGSQARHFWQQDEPQSPWDRVKDLATVYVDAVKEGGRDYVAQFEASALGKQLNLKLLDNWDSLTSTVTKLREQIGPVTQEFWDNLEKETEVLRQEMSKDLEEVKQKVQPYLDEFQKNWHEEVELYRQKVAPLGAELREGARQKLQELQEKLSPLGEELRDRARIHVDALRAQLAPYSDQLRERLAARLQALKEDGGASLAEYHAKASEHLSALSEKAKPALEDLRQGLLPVLESFKVSLLAAVDEAAKKLNAQ.

The N-terminal stretch at 1 to 18 (MKAVVLTLAVLFLTGSQA) is a signal peptide. Repeat copies occupy residues 67 to 88 (LKLLDNWDSLTSTVTKLREQIG) and 89 to 110 (PVTQEFWDNLEKETEVLRQEMS). The tract at residues 67 to 266 (LKLLDNWDSL…DEAAKKLNAQ (200 aa)) is 10 X approximate tandem repeats. Methionine 109 is subject to Methionine sulfoxide. The 3; half-length repeat unit spans residues 111–121 (KDLEEVKQKVQ). 5 repeat units span residues 122–142 (PYLDEFQKNWHEEVELYRQKV), 144–165 (PLGAELREGARQKLQELQEKLS), 166–187 (PLGEELRDRARIHVDALRAQLA), 188–210 (PYSDQLRERLAARLQALKEDGGA), and 211–231 (SLAEYHAKASEHLSALSEKAK). The stretch at 232–242 (PALEDLRQGLL) is one 9; half-length repeat. Repeat 10 spans residues 243–266 (PVLESFKVSLLAAVDEAAKKLNAQ).

Belongs to the apolipoprotein A1/A4/E family. As to quaternary structure, homodimer. Interacts with APOA1BP and CLU. Component of a sperm activating protein complex (SPAP), consisting of APOA1, an immunoglobulin heavy chain, an immunoglobulin light chain and albumin. Interacts with NDRG1. Interacts with SCGB3A2. Interacts with NAXE and YJEFN3. In terms of processing, glycosylated. Palmitoylated. Post-translationally, phosphorylation sites are present in the extracellular medium. As to expression, major protein of plasma HDL, also found in chylomicrons.

The protein resides in the secreted. Functionally, participates in the reverse transport of cholesterol from tissues to the liver for excretion by promoting cholesterol efflux from tissues and by acting as a cofactor for the lecithin cholesterol acyltransferase (LCAT). As part of the SPAP complex, activates spermatozoa motility. In Ailuropoda melanoleuca (Giant panda), this protein is Apolipoprotein A-I (APOA1).